A 55-amino-acid polypeptide reads, in one-letter code: UPF0391 membrane protein Sfum_0248 (55 aa).

Helical transmembrane passes span 4 to 24 (WALIFLAVAIAAGVLGFGGII) and 28 to 48 (AWIAQVLFILFLVFFLVSLLS).

The protein belongs to the UPF0391 family.

Its subcellular location is the cell membrane. The chain is UPF0391 membrane protein Sfum_0248 from Syntrophobacter fumaroxidans (strain DSM 10017 / MPOB).